A 467-amino-acid polypeptide reads, in one-letter code: Dimethylamine methyltransferase MtbB1 (467 aa).

Residue pyrrolysine 356 is a non-standard amino acid, pyrrolysine.

It belongs to the dimethylamine methyltransferase family.

The catalysed reaction is Co(I)-[dimethylamine-specific corrinoid protein] + dimethylamine + H(+) = methyl-Co(III)-[dimethylamine-specific corrinoid protein] + methylamine. The protein operates within one-carbon metabolism; methanogenesis from dimethylamine. Catalyzes the transfer of a methyl group from dimethylamine to the corrinoid cofactor of MtbC. In Methanosarcina barkeri (strain Fusaro / DSM 804), this protein is Dimethylamine methyltransferase MtbB1 (mtbB1).